Reading from the N-terminus, the 683-residue chain is Synaptic vesicle glycoprotein 2B (683 aa).

The segment at 1-42 (MDDYKYQDNYGGYAPSDGYYRGNESNPEEDAQSDVTEGHDEE) is disordered. At 1 to 108 (MDDYKYQDNY…MDECGHGRFQ (108 aa)) the chain is on the cytoplasmic side. Phosphoserine is present on Ser-33. Position 36 is a phosphothreonine (Thr-36). A helical membrane pass occupies residues 109–129 (WILFFVLGLALMADGVEVFVV). The Extracellular segment spans residues 130–148 (SFALPSAEKDMCLSSSKKG). Residues 149–169 (MLGMIVYLGMMAGAFILGGLA) form a helical membrane-spanning segment. Over 170–182 (DKLGRKRVLSMSL) the chain is Cytoplasmic. The helical transmembrane segment at 183 to 203 (AVNASFASLSSFVQGYGAFLF) threads the bilayer. Residues 204–205 (CR) are Extracellular-facing. The chain crosses the membrane as a helical span at residues 206–226 (LISGIGIGGALPIVFAYFSEF). Residues 227–237 (LSREKRGEHLS) are Cytoplasmic-facing. Residues 238–258 (WLGIFWMTGGLYASAMAWSII) traverse the membrane as a helical segment. At 259-277 (PHYGWGFSMGTNYHFHSWR) the chain is on the extracellular side. Residues 278 to 298 (VFVIVCALPCTVSMVALKFMP) traverse the membrane as a helical segment. Topologically, residues 299–390 (ESPRFLLEMG…CVMGPYRMNT (92 aa)) are cytoplasmic. The helical transmembrane segment at 391–411 (LILAVVWFAMAFSYYGLTVWF) threads the bilayer. Residues 412 to 535 (PDMIRYFQDE…CHMDLEQDND (124 aa)) are Extracellular-facing. Position 423 is a phosphotyrosine (Tyr-423). Residues Asn-441, Asn-491, and Asn-516 are each glycosylated (N-linked (GlcNAc...) asparagine). A helical transmembrane segment spans residues 536-556 (FLIYLVSFLGSLSVLPGNIIS). The Cytoplasmic portion of the chain corresponds to 557-565 (ALLMDRIGR). The helical transmembrane segment at 566–586 (LKMIGGSMLISAVCCFFLFFG) threads the bilayer. Over 587–592 (NSESAM) the chain is Extracellular. A helical transmembrane segment spans residues 593–613 (IGWQCLFCGTSIAAWNALDVI). Over 614 to 626 (TVELYPTNQRATA) the chain is Cytoplasmic. A helical transmembrane segment spans residues 627-649 (FGILNGLCKFGAILGNTIFASFV). The Extracellular segment spans residues 650–653 (GITK). Residues 654 to 672 (VVPILLAAASLVGGGLIAL) form a helical membrane-spanning segment. The Cytoplasmic portion of the chain corresponds to 673–683 (RLPETREQVLM).

Belongs to the major facilitator superfamily. As to quaternary structure, interacts with SYT1 in a calcium-independent manner. Forms a complex with SYT1, syntaxin-1 and SNAP25. (Microbial infection) Interacts with C.botulinum neurotoxin type A2 (BoNT/A, botA). Interaction is improved by glycosylation of SV2. N-glycosylated. In terms of processing, the N-terminal cytoplasmic domain is phosphorylated by CK1.

The protein resides in the cytoplasmic vesicle. It is found in the secretory vesicle. The protein localises to the synaptic vesicle membrane. Its subcellular location is the acrosome. Probably plays a role in the control of regulated secretion in neural and endocrine cells. Functionally, (Microbial infection) Receptor for the C.botulinum neurotoxin type A2 (BoNT/A, botA); glycosylation is not essential but enhances the interaction. Probably also serves as a receptor for the closely related C.botulinum neurotoxin type A1. This Homo sapiens (Human) protein is Synaptic vesicle glycoprotein 2B (SV2B).